The chain runs to 299 residues: Phosphatidylserine decarboxylase proenzyme (299 aa).

Active-site charge relay system; for autoendoproteolytic cleavage activity residues include D90, H147, and S254. The active-site Schiff-base intermediate with substrate; via pyruvic acid; for decarboxylase activity is the S254. Pyruvic acid (Ser); by autocatalysis is present on S254.

It belongs to the phosphatidylserine decarboxylase family. PSD-B subfamily. Prokaryotic type I sub-subfamily. In terms of assembly, heterodimer of a large membrane-associated beta subunit and a small pyruvoyl-containing alpha subunit. The cofactor is pyruvate. Is synthesized initially as an inactive proenzyme. Formation of the active enzyme involves a self-maturation process in which the active site pyruvoyl group is generated from an internal serine residue via an autocatalytic post-translational modification. Two non-identical subunits are generated from the proenzyme in this reaction, and the pyruvate is formed at the N-terminus of the alpha chain, which is derived from the carboxyl end of the proenzyme. The autoendoproteolytic cleavage occurs by a canonical serine protease mechanism, in which the side chain hydroxyl group of the serine supplies its oxygen atom to form the C-terminus of the beta chain, while the remainder of the serine residue undergoes an oxidative deamination to produce ammonia and the pyruvoyl prosthetic group on the alpha chain. During this reaction, the Ser that is part of the protease active site of the proenzyme becomes the pyruvoyl prosthetic group, which constitutes an essential element of the active site of the mature decarboxylase.

Its subcellular location is the cell membrane. The enzyme catalyses a 1,2-diacyl-sn-glycero-3-phospho-L-serine + H(+) = a 1,2-diacyl-sn-glycero-3-phosphoethanolamine + CO2. It functions in the pathway phospholipid metabolism; phosphatidylethanolamine biosynthesis; phosphatidylethanolamine from CDP-diacylglycerol: step 2/2. Its function is as follows. Catalyzes the formation of phosphatidylethanolamine (PtdEtn) from phosphatidylserine (PtdSer). This is Phosphatidylserine decarboxylase proenzyme from Erwinia tasmaniensis (strain DSM 17950 / CFBP 7177 / CIP 109463 / NCPPB 4357 / Et1/99).